The sequence spans 217 residues: UPF0502 protein ETA_20480 (217 aa).

The interval 169–188 (GEVDESSRADGHHPDDHRGD) is disordered. The segment covering 173–188 (ESSRADGHHPDDHRGD) has biased composition (basic and acidic residues).

This sequence belongs to the UPF0502 family.

This chain is UPF0502 protein ETA_20480, found in Erwinia tasmaniensis (strain DSM 17950 / CFBP 7177 / CIP 109463 / NCPPB 4357 / Et1/99).